Consider the following 195-residue polypeptide: Shikimate kinase (195 aa).

ATP is bound at residue Gly26–Thr31. Ser30 contacts Mg(2+). Residues Asp48, Arg72, and Gly94 each coordinate substrate. Arg132 provides a ligand contact to ATP. Arg151 contributes to the substrate binding site.

It belongs to the shikimate kinase family. As to quaternary structure, monomer. The cofactor is Mg(2+).

The protein localises to the cytoplasm. It carries out the reaction shikimate + ATP = 3-phosphoshikimate + ADP + H(+). Its pathway is metabolic intermediate biosynthesis; chorismate biosynthesis; chorismate from D-erythrose 4-phosphate and phosphoenolpyruvate: step 5/7. Functionally, catalyzes the specific phosphorylation of the 3-hydroxyl group of shikimic acid using ATP as a cosubstrate. In Synechococcus sp. (strain RCC307), this protein is Shikimate kinase.